We begin with the raw amino-acid sequence, 30 residues long: Snaclec carinactivase-1 regulatory subunit 14 kDa chain (30 aa).

In terms of domain architecture, C-type lectin spans 1-30 (DCLPDWFHYEGHCYRVFDEPKKWADAEKFC). A disulfide bond links Cys-2 and Cys-13.

It belongs to the snaclec family. As to quaternary structure, heterodimer of a metalloproteinase subunit and a regulatory subunit comprising two polypeptides disulfide-linked (14 kDa and 17 kDa chains). As to expression, expressed by the venom gland.

It localises to the secreted. Its function is as follows. Calcium-dependent prothrombin activator. This protein may activate prothrombin via recognition by the regulatory subunit of the calcium ion bound conformation of its gamma-carboxyglutamic acid (GLA) domain, and the subsequent conversion of prothrombin to active thrombin is catalyzed by the catalytic subunit. The polypeptide is Snaclec carinactivase-1 regulatory subunit 14 kDa chain (Echis carinatus (Saw-scaled viper)).